The following is a 173-amino-acid chain: Co-chaperone protein HscB homolog (173 aa).

Residues 5–77 (CHYALFDLQP…PRRARYLLAI (73 aa)) form the J domain.

The protein belongs to the HscB family. Interacts with HscA and stimulates its ATPase activity.

In terms of biological role, co-chaperone involved in the maturation of iron-sulfur cluster-containing proteins. Seems to help targeting proteins to be folded toward HscA. This Pseudomonas putida (strain GB-1) protein is Co-chaperone protein HscB homolog.